We begin with the raw amino-acid sequence, 492 residues long: B3 domain-containing protein REM3 (492 aa).

Residues 12-104 (NRPFFVRSLA…VFHVTPSGRS (93 aa)) constitute a DNA-binding region (TF-B3 1). Over residues 105-116 (FSQIRTSSSSGD) the composition is skewed to low complexity. The segment at 105-134 (FSQIRTSSSSGDYDSDDDDDEAGDDDSDSK) is disordered. A compositionally biased stretch (acidic residues) spans 117 to 131 (YDSDDDDDEAGDDDS). 2 DNA-binding regions (TF-B3) span residues 154–250 (YCLL…LCFK) and 286–382 (FLTV…FCSE). Over residues 385-395 (IEQEEAPEERG) the composition is skewed to basic and acidic residues. Residues 385-427 (IEQEEAPEERGTPLPKRARVSAEVGHSRRTQAPNKSSDDPKIL) form a disordered region.

Its subcellular location is the nucleus. The polypeptide is B3 domain-containing protein REM3 (REM3) (Arabidopsis thaliana (Mouse-ear cress)).